Here is a 238-residue protein sequence, read N- to C-terminus: Ribosomal RNA small subunit methyltransferase G (238 aa).

S-adenosyl-L-methionine is bound by residues G77, F82, 128 to 129 (AE), and R147. The segment at 216-238 (RKERSTPKKYPRKPGTPNKQPLS) is disordered.

The protein belongs to the methyltransferase superfamily. RNA methyltransferase RsmG family.

It localises to the cytoplasm. Its function is as follows. Specifically methylates the N7 position of guanine in position 535 of 16S rRNA. The sequence is that of Ribosomal RNA small subunit methyltransferase G from Halalkalibacterium halodurans (strain ATCC BAA-125 / DSM 18197 / FERM 7344 / JCM 9153 / C-125) (Bacillus halodurans).